A 73-amino-acid chain; its full sequence is U-scoloptoxin(03)-Ssd1b (73 aa).

The signal sequence occupies residues 1-23 (MKSSMAVLLVMGLIIFTLDKCYS).

Post-translationally, contains 3 disulfide bonds. As to expression, expressed by the venom gland.

It localises to the secreted. This is U-scoloptoxin(03)-Ssd1b from Scolopendra dehaani (Thai centipede).